The following is a 365-amino-acid chain: Chorismate synthase (365 aa).

NADP(+) is bound by residues arginine 48 and arginine 54. FMN contacts are provided by residues 125 to 127, 238 to 239, glycine 278, 293 to 297, and arginine 319; these read RSS, NA, and KPTSS.

It belongs to the chorismate synthase family. As to quaternary structure, homotetramer. It depends on FMNH2 as a cofactor.

The catalysed reaction is 5-O-(1-carboxyvinyl)-3-phosphoshikimate = chorismate + phosphate. It functions in the pathway metabolic intermediate biosynthesis; chorismate biosynthesis; chorismate from D-erythrose 4-phosphate and phosphoenolpyruvate: step 7/7. Its function is as follows. Catalyzes the anti-1,4-elimination of the C-3 phosphate and the C-6 proR hydrogen from 5-enolpyruvylshikimate-3-phosphate (EPSP) to yield chorismate, which is the branch point compound that serves as the starting substrate for the three terminal pathways of aromatic amino acid biosynthesis. This reaction introduces a second double bond into the aromatic ring system. The protein is Chorismate synthase of Janthinobacterium sp. (strain Marseille) (Minibacterium massiliensis).